Reading from the N-terminus, the 191-residue chain is Molybdenum cofactor guanylyltransferase (191 aa).

Residues 11-13 (LCG), Lys23, Asp66, and Asp97 each bind GTP. Asp97 is a Mg(2+) binding site.

The protein belongs to the MobA family. In terms of assembly, monomer. Mg(2+) serves as cofactor.

It localises to the cytoplasm. The catalysed reaction is Mo-molybdopterin + GTP + H(+) = Mo-molybdopterin guanine dinucleotide + diphosphate. Transfers a GMP moiety from GTP to Mo-molybdopterin (Mo-MPT) cofactor (Moco or molybdenum cofactor) to form Mo-molybdopterin guanine dinucleotide (Mo-MGD) cofactor. This is Molybdenum cofactor guanylyltransferase from Campylobacter jejuni subsp. jejuni serotype O:6 (strain 81116 / NCTC 11828).